A 210-amino-acid polypeptide reads, in one-letter code: Ribonuclease HII (210 aa).

Residues 18–210 (GLIAGVDEVG…FKPVKALLGL (193 aa)) form the RNase H type-2 domain. A divalent metal cation is bound by residues Asp-24, Glu-25, and Asp-116.

Belongs to the RNase HII family. It depends on Mn(2+) as a cofactor. Requires Mg(2+) as cofactor.

The protein localises to the cytoplasm. It catalyses the reaction Endonucleolytic cleavage to 5'-phosphomonoester.. Its function is as follows. Endonuclease that specifically degrades the RNA of RNA-DNA hybrids. This chain is Ribonuclease HII, found in Shewanella baltica (strain OS223).